A 101-amino-acid chain; its full sequence is UPF0235 protein MmarC5_0538 (101 aa).

This sequence belongs to the UPF0235 family.

This is UPF0235 protein MmarC5_0538 from Methanococcus maripaludis (strain C5 / ATCC BAA-1333).